The sequence spans 861 residues: Rod cGMP-specific 3',5'-cyclic phosphodiesterase subunit alpha (861 aa).

N-acetylglycine is present on Gly2. GAF domains follow at residues 73 to 222 (QAER…NLIM) and 254 to 431 (DIER…GWSV). The 334-residue stretch at 483-816 (EEEELAEILQ…KEWKALADEY (334 aa)) folds into the PDEase domain. His559 (proton donor) is an active-site residue. A divalent metal cation is bound by residues His563, His599, Asp600, and Asp720. The interval 821–861 (KALEEEKQKQQTAKQGAAGDQPGGNPSPAGGAPASKSCCIQ) is disordered. The segment covering 830 to 861 (QQTAKQGAAGDQPGGNPSPAGGAPASKSCCIQ) has biased composition (low complexity). Cys858 carries the post-translational modification Cysteine methyl ester. The S-farnesyl cysteine moiety is linked to residue Cys858. A propeptide spans 859–861 (CIQ) (removed in mature form).

The protein belongs to the cyclic nucleotide phosphodiesterase family. As to quaternary structure, oligomer composed of two catalytic chains (alpha and beta), an inhibitory chain (gamma) and the delta chain. The cofactor is a divalent metal cation.

It localises to the cell membrane. The protein resides in the cell projection. Its subcellular location is the cilium. It is found in the photoreceptor outer segment. The enzyme catalyses 3',5'-cyclic GMP + H2O = GMP + H(+). Its function is as follows. Rod-specific cGMP phosphodiesterase that catalyzes the hydrolysis of 3',5'-cyclic GMP. This protein participates in processes of transmission and amplification of the visual signal. This chain is Rod cGMP-specific 3',5'-cyclic phosphodiesterase subunit alpha, found in Canis lupus familiaris (Dog).